The following is a 619-amino-acid chain: MRKDVRILLVGEPKVGKTSLIMSLVSEEFPDEVPPRAEEITIPADVTPERVPTHIVDYSEAEQSDEQLYQEITKANVICIVYSVNNKKSIEKVTSHWIPLINERTDKDSRVPLILVGNKSDLVEHSSMETILPIMNQYSEIETCVECSAKNLKNISELFYYAQKAVLHPTGPLYSPEEKEMKPSCIKALTRIFKISDLDNDGILNDNELNFFQRTCFNIPLAPQALEDVKNVVRKNMTDGVKDNGLTLKGFLFLHTLFIQRGRHETTWTVLRRFGYDDDLELTQEYLFPLFKIPPDCTTELNHNAYLFLQSVFDKHDKDRDCALSPDELKDLFKVFPYMPWGPDVNNTVCTNEQGWITYQGYLSQWTLTTYLDVQRCLEYLGYLGYSIIQEQESQAAAITVTRNKRIDLQKKQTQRSVFRCNVLGARGCGKSGFLQAFLGRNLVRQKRIREDHKSYYAISTTYVYGQEKYLLLHEVLPDVEFLSEADLACDVVCLVYDISNPRSFEYCAKVYKKHFMDSKTPCVIIAAKSDLHEARQYYSLSPLDFCRKHKLHPPQLFTCNTTEAPSKDLYTKLTTMAMYPHMTQADLKNSTFWLRASVGATVFAVLGFAMYKALLKQR.

Topologically, residues 1–593 are cytoplasmic; that stretch reads MRKDVRILLV…TQADLKNSTF (593 aa). The 167-residue stretch at 2-168 folds into the Miro 1 domain; the sequence is RKDVRILLVG…FYYAQKAVLH (167 aa). GTP contacts are provided by lysine 14, glycine 16, lysine 17, threonine 18, and serine 19. Position 18 (threonine 18) interacts with Mg(2+). Mg(2+) is bound by residues proline 35 and aspartate 57. The GTP site is built by serine 59, asparagine 118, lysine 119, aspartate 121, alanine 149, and lysine 150. EF-hand domains lie at 184–219 and 304–339; these read SCIKALTRIFKISDLDNDGILNDNELNFFQRTCFNI and NAYLFLQSVFDKHDKDRDCALSPDELKDLFKVFPYM. Aspartate 197, aspartate 199, aspartate 201, glutamate 208, aspartate 317, aspartate 319, aspartate 321, alanine 323, and glutamate 328 together coordinate Ca(2+). In terms of domain architecture, Miro 2 spans 416 to 580; it reads RSVFRCNVLG…YTKLTTMAMY (165 aa). Positions 427, 429, 430, 431, 432, 433, 447, 529, 531, 559, and 560 each coordinate GTP. A Mg(2+)-binding site is contributed by arginine 427. The helical; Anchor for type IV membrane protein transmembrane segment at 594–616 threads the bilayer; that stretch reads WLRASVGATVFAVLGFAMYKALL. The Mitochondrial intermembrane segment spans residues 617–619; sequence KQR.

It belongs to the mitochondrial Rho GTPase family. In terms of assembly, homodimer.

It localises to the mitochondrion outer membrane. The catalysed reaction is GTP + H2O = GDP + phosphate + H(+). The enzyme catalyses ATP + H2O = ADP + phosphate + H(+). It carries out the reaction UTP + H2O = UDP + phosphate + H(+). Atypical mitochondrial nucleoside-triphosphatase (NTPase) involved in mitochondrial trafficking. Probably involved in control of anterograde transport of mitochondria and their subcellular distribution. Can hydrolyze GTP, ATP and UTP. In Danio rerio (Zebrafish), this protein is Mitochondrial Rho GTPase 1-A (rhot1a).